A 213-amino-acid chain; its full sequence is Uridine kinase (213 aa).

Residue 15-22 participates in ATP binding; it reads GASASGKS.

It belongs to the uridine kinase family.

It localises to the cytoplasm. The enzyme catalyses uridine + ATP = UMP + ADP + H(+). The catalysed reaction is cytidine + ATP = CMP + ADP + H(+). It participates in pyrimidine metabolism; CTP biosynthesis via salvage pathway; CTP from cytidine: step 1/3. It functions in the pathway pyrimidine metabolism; UMP biosynthesis via salvage pathway; UMP from uridine: step 1/1. The chain is Uridine kinase from Enterobacter sp. (strain 638).